The following is a 416-amino-acid chain: Thyroid hormone receptor alpha-A (416 aa).

The span at 1-13 (MEPMSNKQDSNSS) shows a compositional bias: polar residues. The interval 1 to 37 (MEPMSNKQDSNSSEGDEKGWPDVPKRKRKNSQCSMKS) is disordered. The modulating stretch occupies residues 1-58 (MEPMSNKQDSNSSEGDEKGWPDVPKRKRKNSQCSMKSMSALSVSVPGYIPSYLEKDEP). The segment covering 15-24 (GDEKGWPDVP) has biased composition (basic and acidic residues). 2 consecutive NR C4-type zinc fingers follow at residues 59-79 (CVVCGDKATGYHYRCITCEGC) and 97-121 (CKYEGCCIIDKITRNQCQLCRFKKC). A DNA-binding region (nuclear receptor) is located at residues 59 to 126 (CVVCGDKATG…RFKKCISVGM (68 aa)). The NR LBD domain maps to 169-413 (AEWELIRMAT…PPLFLEVFED (245 aa)).

It belongs to the nuclear hormone receptor family. NR1 subfamily.

The protein resides in the nucleus. Functionally, high affinity receptor for triiodothyronine. This Paralichthys olivaceus (Bastard halibut) protein is Thyroid hormone receptor alpha-A (thra1).